The sequence spans 254 residues: MQLPRNPFKAALDGDTRYGCWAGFATGYAAEILATTGFDWLLIDGEHAPNIVPTTLAQLQALAAYPCAPVVRTVNHDPALIKQLLDIGTQTLMIPMVDTAEQAAQLVAATRYPPHGFRGVGGGLTRATRWGAVEDYMAQAHEELCLIVQVESRSGVDNAEAIAATPGVDAIFVGPFDLSTETGHIGDPTHPEVQAMIRHTLDATHAAGKAAGILAPAEADARRYAQWGFDFIAVGIDISLLRQAAMETVSRYKG.

His-47 (proton acceptor) is an active-site residue. Glu-151 and Asp-177 together coordinate a divalent metal cation.

Belongs to the HpcH/HpaI aldolase family. It depends on a divalent metal cation as a cofactor.

The catalysed reaction is D-glyceraldehyde + pyruvate = 2-dehydro-3-deoxy-L-galactonate. Functionally, aldolase which can catalyze in vitro the aldolisation reaction between hydroxypyruvate (HPA) or pyruvate (PA) and D-glyceraldehyde (D-GA). The condensation of pyruvate and D-glyceraldehyde produces 2-dehydro-3-deoxy-L-galactonate as the major product. Has weak activity with hydroxypyruvate and D-glyceraldehyde. This Chromohalobacter salexigens (strain ATCC BAA-138 / DSM 3043 / CIP 106854 / NCIMB 13768 / 1H11) protein is Hydroxypyruvate/pyruvate aldolase.